The following is a 466-amino-acid chain: Asparagine--tRNA ligase (466 aa).

This sequence belongs to the class-II aminoacyl-tRNA synthetase family. As to quaternary structure, homodimer.

It localises to the cytoplasm. It carries out the reaction tRNA(Asn) + L-asparagine + ATP = L-asparaginyl-tRNA(Asn) + AMP + diphosphate + H(+). The protein is Asparagine--tRNA ligase of Syntrophobacter fumaroxidans (strain DSM 10017 / MPOB).